Consider the following 1165-residue polypeptide: DNA-directed RNA polymerase subunit beta (1165 aa).

It belongs to the RNA polymerase beta chain family. As to quaternary structure, the RNAP catalytic core consists of 2 alpha, 1 beta, 1 beta' and 1 omega subunit. When a sigma factor is associated with the core the holoenzyme is formed, which can initiate transcription.

The catalysed reaction is RNA(n) + a ribonucleoside 5'-triphosphate = RNA(n+1) + diphosphate. DNA-dependent RNA polymerase catalyzes the transcription of DNA into RNA using the four ribonucleoside triphosphates as substrates. In Corynebacterium glutamicum (strain R), this protein is DNA-directed RNA polymerase subunit beta.